Here is a 103-residue protein sequence, read N- to C-terminus: Interleukin-8 (103 aa).

The first 25 residues, Met1 to Leu25, serve as a signal peptide directing secretion. Citrulline is present on Arg27. Cystine bridges form between Cys34–Cys61 and Cys36–Cys77.

It belongs to the intercrine alpha (chemokine CxC) family. Homodimer. Interacts with TNFAIP6 (via Link domain); this interaction interferes with chemokine binding to glycosaminoglycans. Citrullination at Arg-27 prevents proteolysis, and dampens tissue inflammation, it also enhances leukocytosis, possibly through impaired chemokine clearance from the blood circulation. As to expression, alveolar macrophages.

It localises to the secreted. In terms of biological role, chemotactic factor that mediates inflammatory response by attracting neutrophils, basophils, and T-cells to clear pathogens and protect the host from infection. Also plays an important role in neutrophil activation. Released in response to an inflammatory stimulus, exerts its effect by binding to the G-protein-coupled receptors CXCR1 and CXCR2, primarily found in neutrophils, monocytes and endothelial cells. G-protein heterotrimer (alpha, beta, gamma subunits) constitutively binds to CXCR1/CXCR2 receptor and activation by IL8 leads to beta and gamma subunits release from Galpha (GNAI2 in neutrophils) and activation of several downstream signaling pathways including PI3K and MAPK pathways. This is Interleukin-8 (CXCL8) from Sus scrofa (Pig).